Consider the following 111-residue polypeptide: C-X-C motif chemokine 14 (111 aa).

Residues 1-34 form the signal peptide; that stretch reads MSLLPRRAPPVSMRLLAAALLLLLLALYTARVDG. 2 disulfides stabilise this stretch: Cys-37-Cys-63 and Cys-39-Cys-84. Residues 67–81 carry the D-box motif; the sequence is MVIITTKSVSRYRGQ.

The protein belongs to the intercrine alpha (chemokine CxC) family. Ubiquitinated, followed by degradation by the proteasome. As to expression, expressed in heart, brain, placenta, lung, liver, skeletal muscle, kidney and pancreas. Highly expressed in normal tissue without inflammatory stimuli and infrequently expressed in cancer cell lines. Weakly expressed in monocyte-derived dendritic cells. Not detected in lung or unstimulated peripheral blood lymphocytes.

It is found in the secreted. Functionally, potent chemoattractant for neutrophils, and weaker for dendritic cells. Not chemotactic for T-cells, B-cells, monocytes, natural killer cells or granulocytes. Does not inhibit proliferation of myeloid progenitors in colony formation assays. The polypeptide is C-X-C motif chemokine 14 (CXCL14) (Homo sapiens (Human)).